Reading from the N-terminus, the 37-residue chain is Cytochrome b6-f complex subunit 5 (37 aa).

Residues 5 to 25 (LLSGIVPGLIPITLAGSFVIA) traverse the membrane as a helical segment.

Belongs to the PetG family. The 4 large subunits of the cytochrome b6-f complex are cytochrome b6, subunit IV (17 kDa polypeptide, PetD), cytochrome f and the Rieske protein, while the 4 small subunits are PetG, PetL, PetM and PetN. The complex functions as a dimer.

It is found in the plastid membrane. Its function is as follows. Component of the cytochrome b6-f complex, which mediates electron transfer between photosystem II (PSII) and photosystem I (PSI), cyclic electron flow around PSI, and state transitions. PetG is required for either the stability or assembly of the cytochrome b6-f complex. The sequence is that of Cytochrome b6-f complex subunit 5 from Aneura mirabilis (Parasitic liverwort).